A 194-amino-acid chain; its full sequence is Metalloproteinase inhibitor 2 (194 aa).

Zn(2+) is bound at residue Cys1. Involved in metalloproteinase-binding stretches follow at residues 1–4 (CSCS) and 69–70 (SA). Intrachain disulfides connect Cys1–Cys72, Cys3–Cys101, Cys13–Cys126, Cys128–Cys175, Cys133–Cys138, and Cys146–Cys167. An NTR domain is found at 1–126 (CSCSPVHPQQ…SLNHRYQMGC (126 aa)).

Belongs to the protease inhibitor I35 (TIMP) family. In terms of assembly, interacts (via the C-terminal) with MMP2 (via the C-terminal PEX domain); the interaction inhibits the MMP2 activity. The activity of TIMP2 is dependent on the presence of disulfide bonds.

The protein resides in the secreted. In terms of biological role, complexes with metalloproteinases (such as collagenases) and irreversibly inactivates them by binding to their catalytic zinc cofactor. This is Metalloproteinase inhibitor 2 (TIMP2) from Oryctolagus cuniculus (Rabbit).